The primary structure comprises 145 residues: Transcription antitermination protein NusB (145 aa).

The protein belongs to the NusB family.

Its function is as follows. Involved in transcription antitermination. Required for transcription of ribosomal RNA (rRNA) genes. Binds specifically to the boxA antiterminator sequence of the ribosomal RNA (rrn) operons. This is Transcription antitermination protein NusB from Burkholderia cenocepacia (strain HI2424).